The sequence spans 514 residues: 2-isopropylmalate synthase (514 aa).

The Pyruvate carboxyltransferase domain maps to 5–268 (LIIFDTTLRD…DVGIDTTQIV (264 aa)). Mn(2+) is bound by residues D14, H202, H204, and N239. A regulatory domain region spans residues 395 to 514 (KFVSLSQHSE…KDDKLNPQRA (120 aa)).

This sequence belongs to the alpha-IPM synthase/homocitrate synthase family. LeuA type 1 subfamily. Homodimer. Requires Mn(2+) as cofactor.

It localises to the cytoplasm. The catalysed reaction is 3-methyl-2-oxobutanoate + acetyl-CoA + H2O = (2S)-2-isopropylmalate + CoA + H(+). The protein operates within amino-acid biosynthesis; L-leucine biosynthesis; L-leucine from 3-methyl-2-oxobutanoate: step 1/4. In terms of biological role, catalyzes the condensation of the acetyl group of acetyl-CoA with 3-methyl-2-oxobutanoate (2-ketoisovalerate) to form 3-carboxy-3-hydroxy-4-methylpentanoate (2-isopropylmalate). The polypeptide is 2-isopropylmalate synthase (Burkholderia vietnamiensis (strain G4 / LMG 22486) (Burkholderia cepacia (strain R1808))).